The chain runs to 479 residues: Deoxyribodipyrimidine photo-lyase (479 aa).

One can recognise a Photolyase/cryptochrome alpha/beta domain in the interval 6-137; that stretch reads SLKAVWFRRD…PFYTFEDAYL (132 aa). Tyr229 is a binding site for FAD. Arg233 is a binding site for DNA. Residues 241–245 and 278–285 each bind FAD; these read TSRLS and ELAWRDFY. 2 interaction with DNA regions span residues 278–285 and 344–345; these read ELAWRDFY and NR. Residue 375-377 coordinates FAD; it reads DYD. Gln407 contacts DNA.

This sequence belongs to the DNA photolyase class-1 family. Monomer. FAD is required as a cofactor. (6R)-5,10-methylene-5,6,7,8-tetrahydrofolate serves as cofactor.

It carries out the reaction cyclobutadipyrimidine (in DNA) = 2 pyrimidine residues (in DNA).. Functionally, involved in repair of UV radiation-induced DNA damage. Catalyzes the light-dependent monomerization (300-600 nm) of cyclobutyl pyrimidine dimers (in cis-syn configuration), which are formed between adjacent bases on the same DNA strand upon exposure to ultraviolet radiation. The polypeptide is Deoxyribodipyrimidine photo-lyase (phr) (Alkalihalophilus pseudofirmus (strain ATCC BAA-2126 / JCM 17055 / OF4) (Bacillus pseudofirmus)).